Here is a 459-residue protein sequence, read N- to C-terminus: Glycosyl hydrolase family 109 protein 1 (459 aa).

The tat-type signal signal peptide spans 1–31; sequence MHNIHRRHFLKAAGAVTAGLVTANIALNANA. NAD(+) contacts are provided by residues 64–65, D86, 135–138, 155–156, and N184; these read ER, WEWH, and EV. Substrate-binding positions include Y213, R232, 244-247, and Y326; that span reads YPTH. Y244 lines the NAD(+) pocket.

Belongs to the Gfo/Idh/MocA family. Glycosyl hydrolase 109 subfamily. NAD(+) is required as a cofactor. In terms of processing, predicted to be exported by the Tat system. The position of the signal peptide cleavage has not been experimentally proven.

Its function is as follows. Glycosidase. The chain is Glycosyl hydrolase family 109 protein 1 from Shewanella sp. (strain ANA-3).